The chain runs to 45 residues: Unknown protein from spots 23/28/205 of 2D-PAGE of thylakoid (45 aa).

It is found in the plastid. The protein resides in the chloroplast thylakoid. The chain is Unknown protein from spots 23/28/205 of 2D-PAGE of thylakoid from Pisum sativum (Garden pea).